We begin with the raw amino-acid sequence, 306 residues long: UDP-3-O-acyl-N-acetylglucosamine deacetylase (306 aa).

Positions 79, 238, and 242 each coordinate Zn(2+). His-265 (proton donor) is an active-site residue.

The protein belongs to the LpxC family. Zn(2+) is required as a cofactor.

The enzyme catalyses a UDP-3-O-[(3R)-3-hydroxyacyl]-N-acetyl-alpha-D-glucosamine + H2O = a UDP-3-O-[(3R)-3-hydroxyacyl]-alpha-D-glucosamine + acetate. It participates in glycolipid biosynthesis; lipid IV(A) biosynthesis; lipid IV(A) from (3R)-3-hydroxytetradecanoyl-[acyl-carrier-protein] and UDP-N-acetyl-alpha-D-glucosamine: step 2/6. Its function is as follows. Catalyzes the hydrolysis of UDP-3-O-myristoyl-N-acetylglucosamine to form UDP-3-O-myristoylglucosamine and acetate, the committed step in lipid A biosynthesis. This chain is UDP-3-O-acyl-N-acetylglucosamine deacetylase, found in Shewanella denitrificans (strain OS217 / ATCC BAA-1090 / DSM 15013).